Consider the following 525-residue polypeptide: GMP synthase [glutamine-hydrolyzing] (525 aa).

Residues 16–205 (PVLVVDFGAQ…LHDFAGLGAQ (190 aa)) enclose the Glutamine amidotransferase type-1 domain. Cys-93 serves as the catalytic Nucleophile. Catalysis depends on residues His-179 and Glu-181. In terms of domain architecture, GMPS ATP-PPase spans 206–399 (WTPANIANAL…LGLPEEIVAR (194 aa)). 233–239 (SGGVDSA) lines the ATP pocket.

In terms of assembly, homodimer.

It catalyses the reaction XMP + L-glutamine + ATP + H2O = GMP + L-glutamate + AMP + diphosphate + 2 H(+). The protein operates within purine metabolism; GMP biosynthesis; GMP from XMP (L-Gln route): step 1/1. Catalyzes the synthesis of GMP from XMP. The sequence is that of GMP synthase [glutamine-hydrolyzing] (guaA) from Mycobacterium tuberculosis (strain CDC 1551 / Oshkosh).